We begin with the raw amino-acid sequence, 149 residues long: MADNARAARMAKRIQTIVASAIERDIKDRRLEFVTITDVTMTGDLHDAKVFYTVRGASIEEEPDLEAAAEALHRARGQLRKIVGQQLGVRFTPTLTYSIDTVPEASAHMEALLDRARKRDEELAKLREGAAPAGDADPYKTSSKSESEE.

Residues 123 to 149 are disordered; that stretch reads LAKLREGAAPAGDADPYKTSSKSESEE.

Belongs to the RbfA family. Monomer. Binds 30S ribosomal subunits, but not 50S ribosomal subunits or 70S ribosomes.

Its subcellular location is the cytoplasm. Functionally, one of several proteins that assist in the late maturation steps of the functional core of the 30S ribosomal subunit. Associates with free 30S ribosomal subunits (but not with 30S subunits that are part of 70S ribosomes or polysomes). Required for efficient processing of 16S rRNA. May interact with the 5'-terminal helix region of 16S rRNA. This Corynebacterium glutamicum (strain ATCC 13032 / DSM 20300 / JCM 1318 / BCRC 11384 / CCUG 27702 / LMG 3730 / NBRC 12168 / NCIMB 10025 / NRRL B-2784 / 534) protein is Ribosome-binding factor A.